A 418-amino-acid chain; its full sequence is Perilipin-1 homolog (418 aa).

Residues 211 to 275 form a required for lipid droplet localization region; that stretch reads LTIGQRVKNL…EKKTWVIEKS (65 aa).

It belongs to the perilipin family. Expressed in intestinal and epidermal cells. Expressed in the muscle and hypodermis.

The protein localises to the lipid droplet. In terms of biological role, lipid droplet-associated protein which plays a role in lipid droplet clustering. The polypeptide is Perilipin-1 homolog (Caenorhabditis elegans).